The following is a 25-amino-acid chain: Hemocyanin subunit 3 (25 aa).

It belongs to the tyrosinase family. Hemocyanin subfamily. In terms of tissue distribution, hemolymph.

It is found in the secreted. It localises to the extracellular space. Hemocyanins are copper-containing oxygen carriers occurring freely dissolved in the hemolymph of many mollusks and arthropods. The protein is Hemocyanin subunit 3 of Maja squinado (Mediterranean spider crab).